A 294-amino-acid polypeptide reads, in one-letter code: ATP synthase gamma chain (294 aa).

This sequence belongs to the ATPase gamma chain family. As to quaternary structure, F-type ATPases have 2 components, CF(1) - the catalytic core - and CF(0) - the membrane proton channel. CF(1) has five subunits: alpha(3), beta(3), gamma(1), delta(1), epsilon(1). CF(0) has three main subunits: a, b and c.

It is found in the cell inner membrane. Functionally, produces ATP from ADP in the presence of a proton gradient across the membrane. The gamma chain is believed to be important in regulating ATPase activity and the flow of protons through the CF(0) complex. The protein is ATP synthase gamma chain of Campylobacter jejuni subsp. jejuni serotype O:2 (strain ATCC 700819 / NCTC 11168).